We begin with the raw amino-acid sequence, 86 residues long: Large ribosomal subunit protein bL27 (86 aa).

The segment at 1–24 (MAHKKAMGSTENTRDSNPSYLGVK) is disordered. Polar residues predominate over residues 9-19 (STENTRDSNPS).

It belongs to the bacterial ribosomal protein bL27 family.

In Salinibacter ruber (strain DSM 13855 / M31), this protein is Large ribosomal subunit protein bL27.